Here is an 88-residue protein sequence, read N- to C-terminus: Elongation factor 1-beta (88 aa).

Belongs to the EF-1-beta/EF-1-delta family.

Its function is as follows. Promotes the exchange of GDP for GTP in EF-1-alpha/GDP, thus allowing the regeneration of EF-1-alpha/GTP that could then be used to form the ternary complex EF-1-alpha/GTP/AAtRNA. This is Elongation factor 1-beta from Haloarcula marismortui (strain ATCC 43049 / DSM 3752 / JCM 8966 / VKM B-1809) (Halobacterium marismortui).